The chain runs to 227 residues: Ribonuclease S-5 (227 aa).

Residues 1 to 27 (MGITGMVYVVTMVFLLIVLILSSSTVG) form the signal peptide. Glutamine 36 is a binding site for RNA. A disulfide bridge connects residues cysteine 42 and cysteine 49. An N-linked (GlcNAc...) asparagine glycan is attached at asparagine 45. Residues histidine 60, 97-98 (NV), phenylalanine 107, 110-111 (KE), and 114-115 (KH) each bind RNA. The active-site Proton donor is the histidine 60. A disulfide bond links cysteine 75 and cysteine 118. Residue glutamate 111 is part of the active site. Histidine 115 serves as the catalytic Proton acceptor. N-linked (GlcNAc...) asparagine glycosylation is present at asparagine 143. Cystine bridges form between cysteine 182–cysteine 220 and cysteine 197–cysteine 208.

Belongs to the RNase T2 family. In terms of processing, N-glycan at Asn-45 consists of disaccharide (GlcNAc-GlcNAc). N-linked core structure at Asn-143 contains xylose.

It carries out the reaction a ribonucleotidyl-ribonucleotide-RNA + H2O = a 3'-end 3'-phospho-ribonucleotide-RNA + a 5'-end dephospho-ribonucleoside-RNA + H(+). Its function is as follows. Self-incompatibility (SI) is the inherited ability of a flowering plant to prevent self-fertilization by discriminating between self and non-self pollen during pollination. In many species, self-incompatibility is controlled by the single, multiallelic locus S. The polypeptide is Ribonuclease S-5 (Pyrus pyrifolia (Chinese pear)).